We begin with the raw amino-acid sequence, 370 residues long: Gap junction delta-4 protein (370 aa).

The Cytoplasmic segment spans residues 1–19 (MEGVDLLGFLIITLNCNVT). A helical membrane pass occupies residues 20–40 (MXGKLWFVLTMLLRMLVIVLA). Residues 41–76 (GRPVYQDEQERFVCNTLQPGCANVCYDVFSPVSHLR) are Extracellular-facing. Residues 77 to 97 (FWLIQGVCVLLPSAVFSVYVL) form a helical membrane-spanning segment. The Cytoplasmic segment spans residues 98–146 (HRGATLAALGPRRCPEPRDTASGQRRCPGSCRERGGLEVPDFSAGYIIH). A helical membrane pass occupies residues 147 to 167 (LLLRTLLEAAFGALNYLLFGF). Residues 168-196 (LAPNKFPCTRPPCTGVVDCYVSRPTEKSL) lie on the Extracellular side of the membrane. A helical membrane pass occupies residues 197-217 (LMLFLWAVSALSFLLGLADLV). The Cytoplasmic segment spans residues 218 to 370 (CSLRRLMRRR…HLRARKSEWV (153 aa)). Residues 227-370 (RPGPPTSPSI…HLRARKSEWV (144 aa)) are disordered. The span at 246-260 (PEGRPTDKEGGREQE) shows a compositional bias: basic and acidic residues. A compositionally biased stretch (low complexity) spans 331–345 (PSAAPSHLAAHPSCS).

It belongs to the connexin family. Delta-type subfamily. A connexon is composed of a hexamer of connexins.

The protein localises to the cell membrane. It localises to the cell junction. The protein resides in the gap junction. Its function is as follows. One gap junction consists of a cluster of closely packed pairs of transmembrane channels, the connexons, through which materials of low MW diffuse from one cell to a neighboring cell. This is Gap junction delta-4 protein (GJD4) from Macaca fascicularis (Crab-eating macaque).